A 335-amino-acid polypeptide reads, in one-letter code: Glucokinase (335 aa).

11–16 (ADIGGT) contributes to the ATP binding site.

Belongs to the bacterial glucokinase family.

The protein resides in the cytoplasm. The catalysed reaction is D-glucose + ATP = D-glucose 6-phosphate + ADP + H(+). The polypeptide is Glucokinase (Xanthomonas campestris pv. campestris (strain B100)).